Reading from the N-terminus, the 252-residue chain is Imidazole glycerol phosphate synthase subunit HisF (252 aa).

Catalysis depends on residues aspartate 11 and aspartate 130.

It belongs to the HisA/HisF family. Heterodimer of HisH and HisF.

The protein localises to the cytoplasm. It carries out the reaction 5-[(5-phospho-1-deoxy-D-ribulos-1-ylimino)methylamino]-1-(5-phospho-beta-D-ribosyl)imidazole-4-carboxamide + L-glutamine = D-erythro-1-(imidazol-4-yl)glycerol 3-phosphate + 5-amino-1-(5-phospho-beta-D-ribosyl)imidazole-4-carboxamide + L-glutamate + H(+). Its pathway is amino-acid biosynthesis; L-histidine biosynthesis; L-histidine from 5-phospho-alpha-D-ribose 1-diphosphate: step 5/9. Its function is as follows. IGPS catalyzes the conversion of PRFAR and glutamine to IGP, AICAR and glutamate. The HisF subunit catalyzes the cyclization activity that produces IGP and AICAR from PRFAR using the ammonia provided by the HisH subunit. This is Imidazole glycerol phosphate synthase subunit HisF from Bacillus cytotoxicus (strain DSM 22905 / CIP 110041 / 391-98 / NVH 391-98).